A 192-amino-acid chain; its full sequence is Secreted and transmembrane protein 1A (192 aa).

Residues 1-27 (MMTCPSVPAIPTLWLFSILLLVVSLNA) form the signal peptide. The Extracellular portion of the chain corresponds to 28-165 (QNKSWDNPIC…SSPIEGKPGT (138 aa)). N-linked (GlcNAc...) asparagine glycans are attached at residues asparagine 29, asparagine 55, asparagine 84, and asparagine 127. The helical transmembrane segment at 166–186 (LVGVITVIFILGVAGFITFIY) threads the bilayer. Residues 187 to 192 (YRHRRS) are Cytoplasmic-facing.

This sequence belongs to the SECTM family.

It is found in the cell membrane. It localises to the secreted. This chain is Secreted and transmembrane protein 1A, found in Mus musculus (Mouse).